A 338-amino-acid chain; its full sequence is Holliday junction branch migration complex subunit RuvB (338 aa).

The interval A4 to Y187 is large ATPase domain (RuvB-L). Residues R27, G68, K71, T72, T73, E134–Y136, R177, Y187, and R224 each bind ATP. T72 is a binding site for Mg(2+). Residues N188–D258 form a small ATPAse domain (RuvB-S) region. Residues S261 to K338 form a head domain (RuvB-H) region. R297, R316, and R321 together coordinate DNA.

The protein belongs to the RuvB family. Homohexamer. Forms an RuvA(8)-RuvB(12)-Holliday junction (HJ) complex. HJ DNA is sandwiched between 2 RuvA tetramers; dsDNA enters through RuvA and exits via RuvB. An RuvB hexamer assembles on each DNA strand where it exits the tetramer. Each RuvB hexamer is contacted by two RuvA subunits (via domain III) on 2 adjacent RuvB subunits; this complex drives branch migration. In the full resolvosome a probable DNA-RuvA(4)-RuvB(12)-RuvC(2) complex forms which resolves the HJ.

It localises to the cytoplasm. It carries out the reaction ATP + H2O = ADP + phosphate + H(+). Its function is as follows. The RuvA-RuvB-RuvC complex processes Holliday junction (HJ) DNA during genetic recombination and DNA repair, while the RuvA-RuvB complex plays an important role in the rescue of blocked DNA replication forks via replication fork reversal (RFR). RuvA specifically binds to HJ cruciform DNA, conferring on it an open structure. The RuvB hexamer acts as an ATP-dependent pump, pulling dsDNA into and through the RuvAB complex. RuvB forms 2 homohexamers on either side of HJ DNA bound by 1 or 2 RuvA tetramers; 4 subunits per hexamer contact DNA at a time. Coordinated motions by a converter formed by DNA-disengaged RuvB subunits stimulates ATP hydrolysis and nucleotide exchange. Immobilization of the converter enables RuvB to convert the ATP-contained energy into a lever motion, pulling 2 nucleotides of DNA out of the RuvA tetramer per ATP hydrolyzed, thus driving DNA branch migration. The RuvB motors rotate together with the DNA substrate, which together with the progressing nucleotide cycle form the mechanistic basis for DNA recombination by continuous HJ branch migration. Branch migration allows RuvC to scan DNA until it finds its consensus sequence, where it cleaves and resolves cruciform DNA. This chain is Holliday junction branch migration complex subunit RuvB, found in Shewanella woodyi (strain ATCC 51908 / MS32).